The chain runs to 328 residues: Formimidoylglutamase (328 aa).

Positions 133, 159, 161, 163, 253, and 255 each coordinate Mn(2+).

Belongs to the arginase family. It depends on Mn(2+) as a cofactor.

It catalyses the reaction N-formimidoyl-L-glutamate + H2O = formamide + L-glutamate. Its pathway is amino-acid degradation; L-histidine degradation into L-glutamate; L-glutamate from N-formimidoyl-L-glutamate (hydrolase route): step 1/1. Functionally, catalyzes the conversion of N-formimidoyl-L-glutamate to L-glutamate and formamide. This Streptococcus pyogenes serotype M3 (strain ATCC BAA-595 / MGAS315) protein is Formimidoylglutamase.